The primary structure comprises 202 residues: Small ribosomal subunit protein uS4 (202 aa).

A disordered region spans residues 22–43; that stretch reads TRKNARRAYPPGQHGQNRRKRS. In terms of domain architecture, S4 RNA-binding spans 90 to 152; sequence MRLDNTVFRL…DKSRKLVQAN (63 aa).

Belongs to the universal ribosomal protein uS4 family. As to quaternary structure, part of the 30S ribosomal subunit. Contacts protein S5. The interaction surface between S4 and S5 is involved in control of translational fidelity.

Its function is as follows. One of the primary rRNA binding proteins, it binds directly to 16S rRNA where it nucleates assembly of the body of the 30S subunit. Functionally, with S5 and S12 plays an important role in translational accuracy. The polypeptide is Small ribosomal subunit protein uS4 (Gloeothece citriformis (strain PCC 7424) (Cyanothece sp. (strain PCC 7424))).